Reading from the N-terminus, the 620-residue chain is PAN2-PAN3 deadenylation complex subunit PAN3 (620 aa).

The C3H1-type zinc finger occupies 7–36; it reads SAKGTLCKNILIYGYCKYENKGCAFSHRRN. Disordered stretches follow at residues 39–73 and 95–168; these read ANSG…QPST and VFVP…QPGP. Polar residues-rich tracts occupy residues 63–73 and 101–126; these read NVNTPSFQPST and TPAS…TVSN. A pseudokinase domain region spans residues 226-482; the sequence is QSYPGGPEIV…LESYIRKHLA (257 aa). ATP contacts are provided by residues arginine 274, 323–330, and 380–381; these read DYYPNAST and SK. A coiled-coil region spans residues 483–521; it reads IRLLDVVDMLEDSNDYLESQLSTELENARLVRLMTKINF. The segment at 522 to 620 is knob domain; the sequence is IVDRPEWDNE…SVFRTITRGK (99 aa).

It belongs to the protein kinase superfamily. PAN3 family. As to quaternary structure, homodimer. Forms a heterotrimer with a catalytic subunit PAN2 to form the poly(A)-nuclease (PAN) deadenylation complex. Interacts (via PAM-2 motif) with poly(A)-binding protein PAB1 (via PABC domain), conferring substrate specificity of the enzyme complex.

It is found in the cytoplasm. Its function is as follows. Regulatory subunit of the poly(A)-nuclease (PAN) deadenylation complex, one of two cytoplasmic mRNA deadenylases involved in mRNA turnover. PAN specifically shortens poly(A) tails of RNA and the activity is stimulated by poly(A)-binding protein PAB1. PAN deadenylation is followed by rapid degradation of the shortened mRNA tails by the CCR4-NOT complex. Deadenylated mRNAs are then degraded by two alternative mechanisms, namely exosome-mediated 3'-5' exonucleolytic degradation, or deadenylation-dependent mRNA decaping and subsequent 5'-3' exonucleolytic degradation by XRN1. May also be involved in post-transcriptional maturation of mRNA poly(A) tails. PAN3 acts as a positive regulator for PAN activity, recruiting the catalytic subunit PAN2 to mRNA via its interaction with RNA and with PAB1. This chain is PAN2-PAN3 deadenylation complex subunit PAN3, found in Meyerozyma guilliermondii (strain ATCC 6260 / CBS 566 / DSM 6381 / JCM 1539 / NBRC 10279 / NRRL Y-324) (Yeast).